The following is a 296-amino-acid chain: 4-diphosphocytidyl-2-C-methyl-D-erythritol kinase (296 aa).

Residue lysine 13 is part of the active site. 98–108 (PVAAGIGGGSA) is an ATP binding site. The active site involves aspartate 140.

This sequence belongs to the GHMP kinase family. IspE subfamily.

The enzyme catalyses 4-CDP-2-C-methyl-D-erythritol + ATP = 4-CDP-2-C-methyl-D-erythritol 2-phosphate + ADP + H(+). Its pathway is isoprenoid biosynthesis; isopentenyl diphosphate biosynthesis via DXP pathway; isopentenyl diphosphate from 1-deoxy-D-xylulose 5-phosphate: step 3/6. Its function is as follows. Catalyzes the phosphorylation of the position 2 hydroxy group of 4-diphosphocytidyl-2C-methyl-D-erythritol. In Rhodopseudomonas palustris (strain HaA2), this protein is 4-diphosphocytidyl-2-C-methyl-D-erythritol kinase.